A 399-amino-acid chain; its full sequence is MYIKVLSVSELNNYIKRVVDSDYILSNAQVKGEISNFKFHSSGHVYFSLKDEGGKINCIMFRSNAEKLKFIPENGMKVNVKGRVSVYVKDGAYQLYCTEITPEGRGELYEAFEKLKEKLLNEGMFSEEHKRNIPKYPKMIGVITSPTGAAIRDIINVATRRNKSVDMIICPTLVQGVNAPGELIKALDYLNNREDIDTIILARGGGSIEELWAFNDEKLAYAVYNSKKPVVTGVGHETDFTIVDFVSDRRAPTPSAAAEIAVPNINEEMNSFVSLKRALDTSIKTYIQNKCNQLEIAKRMLEKNSPEILIVNGYSSIDNFKYVLDMRIANKIKIEKEKILRYNSILKSNSPINILNKGYSIISDEIGNNISNVDKLKEPDKVHITFKDGKVNAKIDILR.

This sequence belongs to the XseA family. In terms of assembly, heterooligomer composed of large and small subunits.

Its subcellular location is the cytoplasm. It carries out the reaction Exonucleolytic cleavage in either 5'- to 3'- or 3'- to 5'-direction to yield nucleoside 5'-phosphates.. Bidirectionally degrades single-stranded DNA into large acid-insoluble oligonucleotides, which are then degraded further into small acid-soluble oligonucleotides. The sequence is that of Exodeoxyribonuclease 7 large subunit from Clostridium acetobutylicum (strain ATCC 824 / DSM 792 / JCM 1419 / IAM 19013 / LMG 5710 / NBRC 13948 / NRRL B-527 / VKM B-1787 / 2291 / W).